Consider the following 878-residue polypeptide: Leucine--tRNA ligase (878 aa).

Residues 56–66 (PYPSGKLHMGH) carry the 'HIGH' region motif. Positions 630–634 (KMSKS) match the 'KMSKS' region motif. An ATP-binding site is contributed by lysine 633.

It belongs to the class-I aminoacyl-tRNA synthetase family.

The protein resides in the cytoplasm. The enzyme catalyses tRNA(Leu) + L-leucine + ATP = L-leucyl-tRNA(Leu) + AMP + diphosphate. The sequence is that of Leucine--tRNA ligase from Prochlorococcus marinus (strain MIT 9303).